The primary structure comprises 131 residues: UPF0102 protein YraN (131 aa).

The protein belongs to the UPF0102 family.

The chain is UPF0102 protein YraN from Salmonella arizonae (strain ATCC BAA-731 / CDC346-86 / RSK2980).